A 268-amino-acid polypeptide reads, in one-letter code: 4-hydroxy-tetrahydrodipicolinate reductase (268 aa).

NAD(+) contacts are provided by residues Gly-10–Met-15 and Asp-36. Arg-37 contacts NADP(+). NAD(+)-binding positions include Gly-99–Thr-101 and Ser-123–Met-126. Catalysis depends on His-156, which acts as the Proton donor/acceptor. Position 157 (His-157) interacts with (S)-2,3,4,5-tetrahydrodipicolinate. The Proton donor role is filled by Lys-160. Residue Gly-166–Thr-167 coordinates (S)-2,3,4,5-tetrahydrodipicolinate.

It belongs to the DapB family.

The protein localises to the cytoplasm. The catalysed reaction is (S)-2,3,4,5-tetrahydrodipicolinate + NAD(+) + H2O = (2S,4S)-4-hydroxy-2,3,4,5-tetrahydrodipicolinate + NADH + H(+). The enzyme catalyses (S)-2,3,4,5-tetrahydrodipicolinate + NADP(+) + H2O = (2S,4S)-4-hydroxy-2,3,4,5-tetrahydrodipicolinate + NADPH + H(+). It functions in the pathway amino-acid biosynthesis; L-lysine biosynthesis via DAP pathway; (S)-tetrahydrodipicolinate from L-aspartate: step 4/4. Its function is as follows. Catalyzes the conversion of 4-hydroxy-tetrahydrodipicolinate (HTPA) to tetrahydrodipicolinate. The sequence is that of 4-hydroxy-tetrahydrodipicolinate reductase from Burkholderia mallei (strain NCTC 10247).